The primary structure comprises 211 residues: Small ribosomal subunit protein uS3c (211 aa).

One can recognise a KH type-2 domain in the interval 39–109; the sequence is IREFAESRLP…NVALYVTKTQ (71 aa).

The protein belongs to the universal ribosomal protein uS3 family. In terms of assembly, part of the 30S ribosomal subunit.

Its subcellular location is the plastid. The protein resides in the chloroplast. The sequence is that of Small ribosomal subunit protein uS3c (rps3) from Ostreococcus tauri.